Reading from the N-terminus, the 507-residue chain is Glutamate--tRNA ligase (507 aa).

The 'HIGH' region motif lies at 14-24 (PSPTGPLHIGG). The 'KMSKS' region signature appears at 262 to 266 (KLSKR). Lysine 265 provides a ligand contact to ATP.

The protein belongs to the class-I aminoacyl-tRNA synthetase family. Glutamate--tRNA ligase type 1 subfamily. As to quaternary structure, monomer.

The protein localises to the cytoplasm. The enzyme catalyses tRNA(Glu) + L-glutamate + ATP = L-glutamyl-tRNA(Glu) + AMP + diphosphate. Its function is as follows. Catalyzes the attachment of glutamate to tRNA(Glu) in a two-step reaction: glutamate is first activated by ATP to form Glu-AMP and then transferred to the acceptor end of tRNA(Glu). This is Glutamate--tRNA ligase from Porphyromonas gingivalis (strain ATCC 33277 / DSM 20709 / CIP 103683 / JCM 12257 / NCTC 11834 / 2561).